The following is a 535-amino-acid chain: Peptide chain release factor 3 (535 aa).

In terms of domain architecture, tr-type G spans 8–276 (ARRRTFAIIS…ALVEQAPPPG (269 aa)). GTP contacts are provided by residues 17-24 (SHPDAGKT), 85-89 (DTPGH), and 139-142 (NKMD).

The protein belongs to the TRAFAC class translation factor GTPase superfamily. Classic translation factor GTPase family. PrfC subfamily.

Its subcellular location is the cytoplasm. In terms of biological role, increases the formation of ribosomal termination complexes and stimulates activities of RF-1 and RF-2. It binds guanine nucleotides and has strong preference for UGA stop codons. It may interact directly with the ribosome. The stimulation of RF-1 and RF-2 is significantly reduced by GTP and GDP, but not by GMP. This Bordetella petrii (strain ATCC BAA-461 / DSM 12804 / CCUG 43448) protein is Peptide chain release factor 3.